A 365-amino-acid chain; its full sequence is Methionine import ATP-binding protein MetN (365 aa).

An ABC transporter domain is found at 26-261 (VRLVDLKRRF…PQSDITKSLL (236 aa)). 58–65 (GRSGAGKS) is an ATP binding site.

The protein belongs to the ABC transporter superfamily. Methionine importer (TC 3.A.1.24) family. In terms of assembly, the complex is composed of two ATP-binding proteins (MetN), two transmembrane proteins (MetI) and a solute-binding protein (MetQ).

It is found in the cell inner membrane. It catalyses the reaction L-methionine(out) + ATP + H2O = L-methionine(in) + ADP + phosphate + H(+). It carries out the reaction D-methionine(out) + ATP + H2O = D-methionine(in) + ADP + phosphate + H(+). Part of the ABC transporter complex MetNIQ involved in methionine import. Responsible for energy coupling to the transport system. This chain is Methionine import ATP-binding protein MetN, found in Mesorhizobium japonicum (strain LMG 29417 / CECT 9101 / MAFF 303099) (Mesorhizobium loti (strain MAFF 303099)).